Consider the following 325-residue polypeptide: E3 ubiquitin-protein ligase SIAH2 (325 aa).

Over residues 1-15 the composition is skewed to polar residues; the sequence is MSRPSSTGPSANKPC. Residues 1–43 are disordered; the sequence is MSRPSSTGPSANKPCSKQPPPPQTPHAPSPAAPPAAATISAAG. Ser-6 is subject to Phosphoserine. Ser-16 carries the phosphoserine; by DYRK2 modification. Residues 17–33 are compositionally biased toward pro residues; the sequence is KQPPPPQTPHAPSPAAP. At Thr-24 the chain carries Phosphothreonine; by MAPK14. Ser-29 carries the phosphoserine; by DYRK2 and MAPK14 modification. The span at 34–43 shows a compositional bias: low complexity; it reads PAAATISAAG. Ser-69 carries the phosphoserine; by DYRK2 modification. An RING-type zinc finger spans residues 81 to 116; the sequence is CPVCFDYVLPPILQCQAGHLVCNQCRQKLSCCPTCR. Position 120 is a phosphothreonine; by DYRK2 (Thr-120). The interval 131-323 is SBD; sequence VASAVLFPCK…LGINVTISTC (193 aa). Residues 134–194 form an SIAH-type zinc finger; the sequence is AVLFPCKYAT…VMSHLMHAHK (61 aa). The Zn(2+) site is built by Cys-139, Cys-146, His-158, Cys-162, Cys-169, Cys-176, His-188, and His-193.

This sequence belongs to the SINA (Seven in absentia) family. In terms of assembly, homodimer. Interacts with UBE2E2. Interacts with VAV1, without mediating its ubiquitin-mediated degradation. Interacts with CACYBP/SIP. Probable component of some large E3 complex possibly composed of UBE2D1, SIAH2, CACYBP/SIP, SKP1, APC and TBL1X. Interacts with UBE2I. Interacts with PEG10, which may inhibit its activity. Interacts with EGLN2 and SNCAIP. Interacts with DYRK2. Interacts with PEG3. Interacts with NR1D1 and NR1D2. Interacts with DCC. Interacts with AXIN1. Post-translationally, phosphorylated at Ser-29 by DYRK2; this increases the ubiquitin ligase activity and promotes degradation of EGLN3. Phosphorylated at Thr-24 and Ser-29 by MAPK14, which mediates the degradation by the proteasome of EGLN3. Widely expressed at low level in embryos and adults. Expressed in a specific population of germ cells within both the mouse ovary and testis. Absent in primordial oocytes but expressed in all growing oocytes, coincident with their recruitment from the pool of quiescent cells. Its level of expression increases as the oocytes mature. Expressed in Graafian follicles and in fertilized zygotes up until the two cell stage, a time of extensive maternal transcript degradation and zygotic gene activation. Expressed in the testis from postmeiotic spermatids.

Its subcellular location is the cytoplasm. The protein localises to the nucleus. The catalysed reaction is S-ubiquitinyl-[E2 ubiquitin-conjugating enzyme]-L-cysteine + [acceptor protein]-L-lysine = [E2 ubiquitin-conjugating enzyme]-L-cysteine + N(6)-ubiquitinyl-[acceptor protein]-L-lysine.. Its pathway is protein modification; protein ubiquitination. Its function is as follows. E3 ubiquitin-protein ligase that mediates ubiquitination and subsequent proteasomal degradation of target proteins. E3 ubiquitin ligases accept ubiquitin from an E2 ubiquitin-conjugating enzyme in the form of a thioester and then directly transfers the ubiquitin to targeted substrates. Mediates E3 ubiquitin ligase activity either through direct binding to substrates or by functioning as the essential RING domain subunit of larger E3 complexes. Mediates ubiquitination and proteasomal degradation of DYRK2 in response to hypoxia. Promotes monoubiquitination of SNCA. Triggers the ubiquitin-mediated degradation of many substrates, including proteins involved in transcription regulation (GPS2, POU2AF1, PML, NCOR1), a cell surface receptor (DCC), an antiapoptotic protein (BAG1), and a protein involved in synaptic vesicle function in neurons (SYP). It is thereby involved in apoptosis, tumor suppression, cell cycle, transcription and signaling processes. Has some overlapping function with SIAH1. Triggers the ubiquitin-mediated degradation of TRAF2, whereas SIAH1 does not. Regulates cellular clock function via ubiquitination of the circadian transcriptional repressors NR1D1 and NR1D2 leading to their proteasomal degradation. Plays an important role in mediating the rhythmic degradation/clearance of NR1D1 and NR1D2 contributing to their circadian profile of protein abundance. Mediates ubiquitination and degradation of EGLN2 and EGLN3 in response to the unfolded protein response (UPR), leading to their degradation and subsequent stabilization of ATF4. Also part of the Wnt signaling pathway in which it mediates the Wnt-induced ubiquitin-mediated proteasomal degradation of AXIN1. This chain is E3 ubiquitin-protein ligase SIAH2 (Siah2), found in Mus musculus (Mouse).